Consider the following 310-residue polypeptide: MSNYLSSFLLASSLITGTLWIINKILSHNLLDSKIPFNIKKSKIYYKSKQVVQTFASFFPILIIVFIIRTFICEPFQIPSESMMPTLLPGDFILVKKFSYGIKNPFSNNVIVFINTPKRGDIVVFKHPNNNAINYVKRIVGLPGDKINYNILTKRLTITPNNINEQHTKNISINYKYIKPNDFTKHFKLNNIILNNVHSLESSNNNLLQLEMYQEKIEKIAYNIFFKKKLIDQKDLYFKQFSQKQGTWIVPKHKYFVLGDNRDNSLDSRYWGFVPEKNLIGKVVFIWMHLIKKEGQWPTGIQFDRIGNIY.

The helical transmembrane segment at 5-25 threads the bilayer; sequence LSSFLLASSLITGTLWIINKI. The Cytoplasmic portion of the chain corresponds to 26-57; it reads LSHNLLDSKIPFNIKKSKIYYKSKQVVQTFAS. Residues 58–78 traverse the membrane as a helical segment; the sequence is FFPILIIVFIIRTFICEPFQI. Topologically, residues 79 to 310 are extracellular; the sequence is PSESMMPTLL…IQFDRIGNIY (232 aa). Residues Ser-82 and Lys-137 contribute to the active site.

This sequence belongs to the peptidase S26 family.

The protein localises to the cell membrane. The enzyme catalyses Cleavage of hydrophobic, N-terminal signal or leader sequences from secreted and periplasmic proteins.. This is Signal peptidase I (lepB) from Buchnera aphidicola subsp. Baizongia pistaciae (strain Bp).